A 272-amino-acid chain; its full sequence is Protein SSO0103 (272 aa).

Belongs to the CinA family.

The polypeptide is Protein SSO0103 (Saccharolobus solfataricus (strain ATCC 35092 / DSM 1617 / JCM 11322 / P2) (Sulfolobus solfataricus)).